The following is a 197-amino-acid chain: RNA pyrophosphohydrolase (197 aa).

Residues 6–154 form the Nudix hydrolase domain; the sequence is GYRPNVGIVL…KREVYQLALS (149 aa). The Nudix box signature appears at 38–59; the sequence is GGIQHGESPEQAMYRELHEEVG.

Belongs to the Nudix hydrolase family. RppH subfamily. Requires a divalent metal cation as cofactor.

Functionally, accelerates the degradation of transcripts by removing pyrophosphate from the 5'-end of triphosphorylated RNA, leading to a more labile monophosphorylated state that can stimulate subsequent ribonuclease cleavage. This is RNA pyrophosphohydrolase from Polynucleobacter necessarius subsp. necessarius (strain STIR1).